Here is a 451-residue protein sequence, read N- to C-terminus: Ubiquinone biosynthesis monooxygenase COQ6, mitochondrial (451 aa).

This sequence belongs to the UbiH/COQ6 family. Component of a multi-subunit COQ enzyme complex. FAD serves as cofactor.

The protein localises to the mitochondrion inner membrane. The enzyme catalyses a 4-hydroxy-3-(all-trans-polyprenyl)benzoate + 2 reduced [2Fe-2S]-[ferredoxin] + O2 + 2 H(+) = a 3,4-dihydroxy-5-(all-trans-polyprenyl)benzoate + 2 oxidized [2Fe-2S]-[ferredoxin] + H2O. The catalysed reaction is a 2-methoxy-6-(all-trans-polyprenyl)phenol + 2 reduced [2Fe-2S]-[ferredoxin] + O2 + 2 H(+) = a 2-methoxy-6-(all-trans-polyprenyl)benzene-1,4-diol + 2 oxidized [2Fe-2S]-[ferredoxin] + H2O. The protein operates within cofactor biosynthesis; ubiquinone biosynthesis. Its function is as follows. FAD-dependent monooxygenase required for two non-consecutive steps during ubiquinone biosynthesis. Required for the C5-ring hydroxylation during ubiquinone biosynthesis by catalyzing the hydroxylation of 4-hydroxy-3-(all-trans-polyprenyl)benzoic acid to 3,4-dihydroxy-5-(all-trans-polyprenyl)benzoic acid. Also acts downstream of coq4, for the C1-hydroxylation during ubiquinone biosynthesis by catalyzing the hydroxylation of 2-methoxy-6-(all-trans-polyprenyl)phenol to 2-methoxy-6-(all-trans-polyprenyl)benzene-1,4-diol. The electrons required for the hydroxylation reaction are funneled indirectly to coq-6 from NADPH via a ferredoxin/ferredoxin reductase system. The protein is Ubiquinone biosynthesis monooxygenase COQ6, mitochondrial of Caenorhabditis elegans.